The chain runs to 186 residues: dTTP/UTP pyrophosphatase (186 aa).

The active-site Proton acceptor is aspartate 66.

The protein belongs to the Maf family. YhdE subfamily. Requires a divalent metal cation as cofactor.

It is found in the cytoplasm. It carries out the reaction dTTP + H2O = dTMP + diphosphate + H(+). It catalyses the reaction UTP + H2O = UMP + diphosphate + H(+). Its function is as follows. Nucleoside triphosphate pyrophosphatase that hydrolyzes dTTP and UTP. May have a dual role in cell division arrest and in preventing the incorporation of modified nucleotides into cellular nucleic acids. The protein is dTTP/UTP pyrophosphatase of Pyrococcus horikoshii (strain ATCC 700860 / DSM 12428 / JCM 9974 / NBRC 100139 / OT-3).